A 387-amino-acid chain; its full sequence is Large ribosomal subunit protein uL3 (387 aa).

Belongs to the universal ribosomal protein uL3 family.

It localises to the cytoplasm. This chain is Large ribosomal subunit protein uL3 (RPL3), found in Kluyveromyces lactis (strain ATCC 8585 / CBS 2359 / DSM 70799 / NBRC 1267 / NRRL Y-1140 / WM37) (Yeast).